Consider the following 433-residue polypeptide: FAD-dependent monooxygenase notI (433 aa).

Positions 45 and 117 each coordinate FAD. Residue arginine 195 is part of the active site. FAD-binding residues include aspartate 314 and alanine 327.

It belongs to the paxM FAD-dependent monooxygenase family. FAD is required as a cofactor.

The protein operates within alkaloid biosynthesis. In terms of biological role, FAD-dependent monooxygenase; part of the gene cluster that mediates the biosynthesis of notoamide, a fungal indole alkaloid that belongs to a family of natural products containing a characteristic bicyclo[2.2.2]diazaoctane core. The first step of notoamide biosynthesis involves coupling of L-proline and L-tryptophan by the bimodular NRPS notE, to produce cyclo-L-tryptophan-L-proline called brevianamide F. The reverse prenyltransferase notF then acts as a deoxybrevianamide E synthase and converts brevianamide F to deoxybrevianamide E via reverse prenylation at C-2 of the indole ring leading to the bicyclo[2.2.2]diazaoctane core. Deoxybrevianamide E is further hydroxylated at C-6 of the indole ring, likely catalyzed by the cytochrome P450 monooxygenase notG, to yield 6-hydroxy-deoxybrevianamide E. 6-hydroxy-deoxybrevianamide E is a specific substrate of the prenyltransferase notC for normal prenylation at C-7 to produce 6-hydroxy-7-prenyl-deoxybrevianamide, also called notoamide S. As the proposed pivotal branching point in notoamide biosynthesis, notoamide S can be diverted to notoamide E through an oxidative pyran ring closure putatively catalyzed by either notH cytochrome P450 monooxygenase or the notD FAD-linked oxidoreductase. This step would be followed by an indole 2,3-epoxidation-initiated pinacol-like rearrangement catalyzed by the notB FAD-dependent monooxygenase leading to the formation of notoamide C and notoamide D. On the other hand notoamide S is converted to notoamide T by notH (or notD), a bifunctional oxidase that also functions as the intramolecular Diels-Alderase responsible for generation of (+)-notoamide T. To generate antipodal (-)-notoaminide T, notH' (or notD') in Aspergillus versicolor is expected to catalyze a Diels-Alder reaction leading to the opposite stereochemistry. The remaining oxidoreductase notD (or notH) likely catalyzes the oxidative pyran ring formation to yield (+)-stephacidin A. The FAD-dependent monooxygenase notI is highly similar to notB and is predicted to catalyze a similar conversion from (+)-stephacidin A to (-)-notoamide B via the 2,3-epoxidation of (+)-stephacidin A followed by a pinacol-type rearrangement. Finally, it remains unclear which enzyme could be responsible for the final hydroxylation steps leading to notoamide A and sclerotiamide. In Aspergillus sp. (strain MF297-2), this protein is FAD-dependent monooxygenase notI.